The chain runs to 245 residues: GSIPFWIALIASFSVFLQGVKVKAPTFEITNKCPYTVWAAAFPGGGKQLAQGQSWSVQPDAGTSTGRIWGRTDCSFDGSGRGTCQSGDCNGTLNCQGDASAPVTLVEYTHNPSMNLDFYDISLLDGFNLPLSITPTSTNPNCKGIITCLSDINSQCPNELKVSGGCLSACVKYNTDDHCCRGANCNQTLYSRFFKEQCPQAYSYAKDDVTSAFTCPSGTDYKIVFCGKSDHIFALYLYITINNEE.

Residues 1 to 19 (GSIPFWIALIASFSVFLQG) form the signal peptide. Intrachain disulfides connect Cys-33-Cys-226, Cys-74-Cys-84, Cys-89-Cys-95, Cys-142-Cys-215, Cys-148-Cys-198, Cys-156-Cys-166, Cys-170-Cys-179, and Cys-180-Cys-185. Asn-90 carries N-linked (GlcNAc...) asparagine glycosylation. A glycan (N-linked (GlcNAc...) asparagine) is linked at Asn-186.

The protein belongs to the thaumatin family. Mostly expressed in strobili, and, to a lower extent, in roots of seedlings and saplings.

In terms of biological role, may be involved in disease resistance. The chain is Pathogenesis-related thaumatin-like protein 3.6 from Cryptomeria japonica (Japanese cedar).